Here is a 127-residue protein sequence, read N- to C-terminus: NHP2-like protein 1 homolog (127 aa).

The protein belongs to the eukaryotic ribosomal protein eL8 family.

It is found in the nucleus. It localises to the nucleolus. Functionally, binds to the 5'-stem-loop of U4 snRNA and may play a role in the late stage of spliceosome assembly. The protein undergoes a conformational change upon RNA-binding. This Drosophila melanogaster (Fruit fly) protein is NHP2-like protein 1 homolog (hoip).